The following is a 146-amino-acid chain: Protein translocase subunit SecE (146 aa).

The interval 1–81 (MSDERYAASD…KVKKPKKSAD (81 aa)) is disordered. Residues 10-20 (DGGGTEVGSGT) show a composition bias toward gly residues. The span at 45-54 (RAANASNTGA) shows a compositional bias: polar residues. Residues 69-81 (KEGKVKKPKKSAD) are compositionally biased toward basic and acidic residues. Residues 118–138 (VVLAFLAFMVALVGLADFGLA) traverse the membrane as a helical segment.

Belongs to the SecE/SEC61-gamma family. Component of the Sec protein translocase complex. Heterotrimer consisting of SecY, SecE and SecG subunits. The heterotrimers can form oligomers, although 1 heterotrimer is thought to be able to translocate proteins. Interacts with the ribosome. Interacts with SecDF, and other proteins may be involved. Interacts with SecA.

It localises to the cell membrane. In terms of biological role, essential subunit of the Sec protein translocation channel SecYEG. Clamps together the 2 halves of SecY. May contact the channel plug during translocation. The protein is Protein translocase subunit SecE of Mycobacterium leprae (strain TN).